A 223-amino-acid polypeptide reads, in one-letter code: Ribosomal RNA small subunit methyltransferase G (223 aa).

Gly85, Phe90, and Arg154 together coordinate S-adenosyl-L-methionine.

It belongs to the methyltransferase superfamily. RNA methyltransferase RsmG family.

It is found in the cytoplasm. The enzyme catalyses guanosine(527) in 16S rRNA + S-adenosyl-L-methionine = N(7)-methylguanosine(527) in 16S rRNA + S-adenosyl-L-homocysteine. Specifically methylates the N7 position of guanine in position 527 of 16S rRNA. The protein is Ribosomal RNA small subunit methyltransferase G of Rhodopseudomonas palustris (strain TIE-1).